The chain runs to 98 residues: SPbeta prophage-derived uncharacterized protein YorB (98 aa).

The polypeptide is SPbeta prophage-derived uncharacterized protein YorB (yorB) (Bacillus subtilis (strain 168)).